The primary structure comprises 176 residues: MAKAIIDIETTGLNPMEHRIVAIGVKLGDRDIILMDESEYYLLVNFWDTVEKEGIEKIIGFNIDFDWQFLKLRSLYHRLKIKHFRKYQGRVDLRQILNGSGGQYRKGTKLVDYCRFLGIDVPEDDANGSEIPELWEKFEEEGDEEAKRKICEHLKRDLERTWELYKILVDCGLIEE.

This is an uncharacterized protein from Methanocaldococcus jannaschii (strain ATCC 43067 / DSM 2661 / JAL-1 / JCM 10045 / NBRC 100440) (Methanococcus jannaschii).